The following is a 179-amino-acid chain: Large ribosomal subunit protein uL5 (179 aa).

Belongs to the universal ribosomal protein uL5 family. Part of the 50S ribosomal subunit; part of the 5S rRNA/L5/L18/L25 subcomplex. Contacts the 5S rRNA and the P site tRNA. Forms a bridge to the 30S subunit in the 70S ribosome.

Its function is as follows. This is one of the proteins that bind and probably mediate the attachment of the 5S RNA into the large ribosomal subunit, where it forms part of the central protuberance. In the 70S ribosome it contacts protein S13 of the 30S subunit (bridge B1b), connecting the 2 subunits; this bridge is implicated in subunit movement. Contacts the P site tRNA; the 5S rRNA and some of its associated proteins might help stabilize positioning of ribosome-bound tRNAs. This Salmonella agona (strain SL483) protein is Large ribosomal subunit protein uL5.